A 67-amino-acid polypeptide reads, in one-letter code: uncharacterized protein (67 aa).

This is an uncharacterized protein from Rickettsia prowazekii (strain Madrid E).